Reading from the N-terminus, the 157-residue chain is Histone H2B.3 (157 aa).

A disordered region spans residues 1-64 (MAPKKEEKPA…DKKSKKKAKV (64 aa)). Over residues 26 to 42 (KAVKAPKKKEKKAPAKK) the composition is skewed to basic residues. Residue K153 forms a Glycyl lysine isopeptide (Lys-Gly) (interchain with G-Cter in ubiquitin) linkage.

It belongs to the histone H2B family. In terms of assembly, the nucleosome is a histone octamer containing two molecules each of H2A, H2B, H3 and H4 assembled in one H3-H4 heterotetramer and two H2A-H2B heterodimers. The octamer wraps approximately 147 bp of DNA. Monoubiquitinated to form H2BK143ub1; may give a specific tag for epigenetic transcriptional activation.

Its subcellular location is the nucleus. The protein resides in the chromosome. In terms of biological role, core component of nucleosome. Nucleosomes wrap and compact DNA into chromatin, limiting DNA accessibility to the cellular machineries which require DNA as a template. Histones thereby play a central role in transcription regulation, DNA repair, DNA replication and chromosomal stability. DNA accessibility is regulated via a complex set of post-translational modifications of histones, also called histone code, and nucleosome remodeling. The polypeptide is Histone H2B.3 (Volvox carteri (Green alga)).